We begin with the raw amino-acid sequence, 155 residues long: MKQSDLQRLVERVSLQFFKKPFKHTATFNPRLRTTGGRYILQTHNIELNKKYYEAFGEEELIAIIKHELCHYHLHLEGKGYRHRDQDFRDLLRQVQAPRYCRPLPQQAQQRTKKVYVYVCSKCSLKYRRKKRVNTDKYVCGQCGGKLMLDNGGEI.

One can recognise a SprT-like domain in the interval 6–148 (LQRLVERVSL…VCGQCGGKLM (143 aa)). His-67 contacts Zn(2+). Residue Glu-68 is part of the active site. His-71 provides a ligand contact to Zn(2+).

It belongs to the SprT family. The cofactor is Zn(2+).

It localises to the cytoplasm. In Geobacillus sp. (strain WCH70), this protein is Protein SprT-like.